Here is a 466-residue protein sequence, read N- to C-terminus: Glucose-6-phosphate 1-dehydrogenase 1 (466 aa).

NADP(+) is bound by residues serine 48, 88 to 89 (DV), and lysine 141. Substrate is bound by residues histidine 171, lysine 175, glutamate 209, and aspartate 228. The active-site Proton acceptor is the histidine 233. Substrate-binding residues include lysine 319 and lysine 324.

Belongs to the glucose-6-phosphate dehydrogenase family.

The catalysed reaction is D-glucose 6-phosphate + NADP(+) = 6-phospho-D-glucono-1,5-lactone + NADPH + H(+). It functions in the pathway carbohydrate degradation; pentose phosphate pathway; D-ribulose 5-phosphate from D-glucose 6-phosphate (oxidative stage): step 1/3. Its function is as follows. Catalyzes the oxidation of glucose 6-phosphate to 6-phosphogluconolactone. The polypeptide is Glucose-6-phosphate 1-dehydrogenase 1 (Mycobacterium tuberculosis (strain CDC 1551 / Oshkosh)).